The sequence spans 36 residues: Photosystem I reaction center subunit VIII (36 aa).

The helical transmembrane segment at 7–29 (PSIFVPLVGLVFPAITMASLFIY) threads the bilayer.

The protein belongs to the PsaI family.

Its subcellular location is the plastid. It is found in the chloroplast thylakoid membrane. Functionally, may help in the organization of the PsaL subunit. The protein is Photosystem I reaction center subunit VIII of Psilotum nudum (Whisk fern).